An 815-amino-acid polypeptide reads, in one-letter code: (-)-kolavenyl diphosphate synthase TPS28, chloroplastic (815 aa).

The transit peptide at Met-1 to Ile-51 directs the protein to the chloroplast. Lys-247 lines the substrate pocket. Asp-379 and Asp-381 together coordinate Mg(2+). A DXDD motif motif is present at residues Asp-379–Asp-382. A substrate-binding site is contributed by Lys-465.

This sequence belongs to the terpene synthase family. Tpsc subfamily. Mg(2+) serves as cofactor.

It localises to the plastid. The protein localises to the chloroplast. The catalysed reaction is (2E,6E,10E)-geranylgeranyl diphosphate = (-)-kolavenyl diphosphate. Its activity is regulated as follows. Inhibited by high concentrations of magnesium. Diterpene synthase that catalyzes the formation of (-)-kolavenyl diphosphate from geranylgeranyl diphosphate (GGPP). In Tripterygium wilfordii (Thunder God vine), this protein is (-)-kolavenyl diphosphate synthase TPS28, chloroplastic.